A 325-amino-acid chain; its full sequence is tRNA-dihydrouridine(16) synthase (325 aa).

Residues 12–14 (PMQ) and Q73 each bind FMN. The Proton donor role is filled by C103. FMN-binding positions include K144, 205–207 (NGE), and 229–230 (GR).

The protein belongs to the Dus family. DusC subfamily. FMN is required as a cofactor.

The catalysed reaction is 5,6-dihydrouridine(16) in tRNA + NADP(+) = uridine(16) in tRNA + NADPH + H(+). It catalyses the reaction 5,6-dihydrouridine(16) in tRNA + NAD(+) = uridine(16) in tRNA + NADH + H(+). In terms of biological role, catalyzes the synthesis of 5,6-dihydrouridine (D), a modified base found in the D-loop of most tRNAs, via the reduction of the C5-C6 double bond in target uridines. Specifically modifies U16 in tRNAs. The chain is tRNA-dihydrouridine(16) synthase from Haemophilus ducreyi (strain 35000HP / ATCC 700724).